The primary structure comprises 209 residues: Large ribosomal subunit protein uL3 (209 aa).

Belongs to the universal ribosomal protein uL3 family. In terms of assembly, part of the 50S ribosomal subunit. Forms a cluster with proteins L14 and L19.

Its function is as follows. One of the primary rRNA binding proteins, it binds directly near the 3'-end of the 23S rRNA, where it nucleates assembly of the 50S subunit. This chain is Large ribosomal subunit protein uL3, found in Nitratidesulfovibrio vulgaris (strain ATCC 29579 / DSM 644 / CCUG 34227 / NCIMB 8303 / VKM B-1760 / Hildenborough) (Desulfovibrio vulgaris).